The following is a 363-amino-acid chain: Uroporphyrinogen decarboxylase (363 aa).

Substrate-binding positions include 27–31, D77, Y157, T212, and H333; that span reads RQAGR.

Belongs to the uroporphyrinogen decarboxylase family. In terms of assembly, homodimer.

The protein resides in the cytoplasm. The catalysed reaction is uroporphyrinogen III + 4 H(+) = coproporphyrinogen III + 4 CO2. It functions in the pathway porphyrin-containing compound metabolism; protoporphyrin-IX biosynthesis; coproporphyrinogen-III from 5-aminolevulinate: step 4/4. In terms of biological role, catalyzes the decarboxylation of four acetate groups of uroporphyrinogen-III to yield coproporphyrinogen-III. The sequence is that of Uroporphyrinogen decarboxylase from Cupriavidus necator (strain ATCC 17699 / DSM 428 / KCTC 22496 / NCIMB 10442 / H16 / Stanier 337) (Ralstonia eutropha).